The following is a 460-amino-acid chain: Cysteine proteinase 7 (460 aa).

A signal peptide spans Met-1–Ala-17. Residues Lys-18–Ser-111 constitute a propeptide, activation peptide. 2 disulfide bridges follow: Cys-131-Cys-176 and Cys-167-Cys-210. Cys-134 is an active-site residue. Residues Asn-226 and Asn-252 are each glycosylated (N-linked (GlcNAc...) asparagine). Cys-268 and Cys-445 are joined by a disulfide. The active site involves His-275. A disordered region spans residues Gly-285–Gly-409. The segment covering Gly-294–Gly-359 has biased composition (low complexity). Positions Ala-367 to Ser-385 are enriched in gly residues. The segment covering Val-386 to Gly-409 has biased composition (low complexity). Asn-423 is an active-site residue.

This sequence belongs to the peptidase C1 family. Post-translationally, glycosylated; contains GlcNAc-alpha-1-P-Ser residues. Also N-glycosylated.

The protein resides in the lysosome. In Dictyostelium discoideum (Social amoeba), this protein is Cysteine proteinase 7 (cprG).